A 251-amino-acid polypeptide reads, in one-letter code: Probable transcriptional regulatory protein BLD_0450 (251 aa).

The protein belongs to the TACO1 family.

It localises to the cytoplasm. The chain is Probable transcriptional regulatory protein BLD_0450 from Bifidobacterium longum (strain DJO10A).